The primary structure comprises 113 residues: Large ribosomal subunit protein uL22 (113 aa).

This sequence belongs to the universal ribosomal protein uL22 family. As to quaternary structure, part of the 50S ribosomal subunit.

Functionally, this protein binds specifically to 23S rRNA; its binding is stimulated by other ribosomal proteins, e.g. L4, L17, and L20. It is important during the early stages of 50S assembly. It makes multiple contacts with different domains of the 23S rRNA in the assembled 50S subunit and ribosome. The globular domain of the protein is located near the polypeptide exit tunnel on the outside of the subunit, while an extended beta-hairpin is found that lines the wall of the exit tunnel in the center of the 70S ribosome. This chain is Large ribosomal subunit protein uL22, found in Symbiobacterium thermophilum (strain DSM 24528 / JCM 14929 / IAM 14863 / T).